Consider the following 493-residue polypeptide: Cysteine--tRNA ligase (493 aa).

Cys41 is a Zn(2+) binding site. The 'HIGH' region signature appears at 43–53 (PTVYNYPHIGN). 3 residues coordinate Zn(2+): Cys231, His256, and Glu260. The 'KMSKS' region signature appears at 296–300 (KMSKS). Lys299 is an ATP binding site.

It belongs to the class-I aminoacyl-tRNA synthetase family. Monomer. Zn(2+) serves as cofactor.

The protein resides in the cytoplasm. It carries out the reaction tRNA(Cys) + L-cysteine + ATP = L-cysteinyl-tRNA(Cys) + AMP + diphosphate. In Novosphingobium aromaticivorans (strain ATCC 700278 / DSM 12444 / CCUG 56034 / CIP 105152 / NBRC 16084 / F199), this protein is Cysteine--tRNA ligase.